Reading from the N-terminus, the 286-residue chain is Probable ketoamine kinase EAE_16955 (286 aa).

92 to 94 (EYL) is an ATP binding site. Aspartate 194 functions as the Proton acceptor in the catalytic mechanism.

Belongs to the fructosamine kinase family.

Ketoamine kinase that phosphorylates ketoamines on the third carbon of the sugar moiety to generate ketoamine 3-phosphate. This Klebsiella aerogenes (strain ATCC 13048 / DSM 30053 / CCUG 1429 / JCM 1235 / KCTC 2190 / NBRC 13534 / NCIMB 10102 / NCTC 10006 / CDC 819-56) (Enterobacter aerogenes) protein is Probable ketoamine kinase EAE_16955.